We begin with the raw amino-acid sequence, 558 residues long: Kelch-like protein 23 (558 aa).

The BTB domain maps to 36–104 (TDITLQCPSG…AYTSQIEITE (69 aa)). The BACK domain occupies 139–240 (CIGMHSFAEF…DPVYLKTALG (102 aa)). Kelch repeat units follow at residues 274 to 320 (TMYI…CLGP), 321 to 369 (NIYV…TLGG), 370 to 416 (CVYA…VLHD), 418 to 466 (IYVI…PLEN), 467 to 508 (KLYL…IMNG), and 510 to 557 (IYVT…CVYN).

This is Kelch-like protein 23 (KLHL23) from Pongo abelii (Sumatran orangutan).